The following is a 387-amino-acid chain: Small ribosomal subunit biogenesis GTPase RsgA (387 aa).

The 162-residue stretch at 112 to 273 (YDGLKPVAAN…LIDSPGVREF (162 aa)) folds into the CP-type G domain. GTP is bound by residues 159 to 162 (NKID) and 213 to 221 (GQSGVGKSS). Cysteine 297, cysteine 302, histidine 304, and cysteine 310 together coordinate Zn(2+).

Belongs to the TRAFAC class YlqF/YawG GTPase family. RsgA subfamily. Monomer. Associates with 30S ribosomal subunit, binds 16S rRNA. Zn(2+) is required as a cofactor.

The protein resides in the cytoplasm. In terms of biological role, one of several proteins that assist in the late maturation steps of the functional core of the 30S ribosomal subunit. Helps release RbfA from mature subunits. May play a role in the assembly of ribosomal proteins into the subunit. Circularly permuted GTPase that catalyzes slow GTP hydrolysis, GTPase activity is stimulated by the 30S ribosomal subunit. In Vibrio cholerae serotype O1 (strain ATCC 39315 / El Tor Inaba N16961), this protein is Small ribosomal subunit biogenesis GTPase RsgA.